The primary structure comprises 143 residues: Transcription antitermination protein NusB (143 aa).

It belongs to the NusB family.

Functionally, involved in transcription antitermination. Required for transcription of ribosomal RNA (rRNA) genes. Binds specifically to the boxA antiterminator sequence of the ribosomal RNA (rrn) operons. This chain is Transcription antitermination protein NusB, found in Mannheimia succiniciproducens (strain KCTC 0769BP / MBEL55E).